The sequence spans 346 residues: fMet-Leu-Phe receptor (346 aa).

2 N-linked (GlcNAc...) asparagine glycosylation sites follow: N1 and N7. Residues 1 to 24 (NSSLPTNISGGTPAVSAGYLFLDI) lie on the Extracellular side of the membrane. Residues 25–47 (ITYLVYAVTFVLGVLGNGLVIWV) traverse the membrane as a helical segment. Residues 48 to 58 (AGFRMTHTVTT) lie on the Cytoplasmic side of the membrane. A helical membrane pass occupies residues 59–80 (ISYLNLAVADFCFTSTLPFFMV). Residues 81–97 (RKAMGGHWPFGWFLCKF) lie on the Extracellular side of the membrane. A disulfide bond links C95 and C173. Residues 98-118 (IFTIVDINLFGSVFLIALIAL) traverse the membrane as a helical segment. Residues 119-137 (DRCVCVLHPVWTQNHRTVS) lie on the Cytoplasmic side of the membrane. A helical membrane pass occupies residues 138 to 159 (LAKKVIIGPWVMALLLTLPVII). Over 160–202 (RVTTVPGKMGTVSCTFNFSPWTNDPKERIKVAIAMLTVRGIIR) the chain is Extracellular. The helical transmembrane segment at 203–223 (FIIGFSAPMSIVAVSYGLIAT) threads the bilayer. Residues 224–239 (KIHKQGLIKSSRPLRV) are Cytoplasmic-facing. Residues 240 to 263 (LSFVAAAFFLCWSPYQVVAFIATV) form a helical membrane-spanning segment. Residues 264–282 (RIRELLQGMYKEISIAVDV) are Extracellular-facing. A helical membrane pass occupies residues 283–302 (TSALAFFNSCLNPMLYVFMG). Residues 303-346 (QDFRERLIHSLPASLERALTEASTQTSDTATNSTLPSAEVALQA) lie on the Cytoplasmic side of the membrane. A compositionally biased stretch (polar residues) spans 324-338 (ASTQTSDTATNSTLP). The disordered stretch occupies residues 324 to 346 (ASTQTSDTATNSTLPSAEVALQA).

Belongs to the G-protein coupled receptor 1 family. In terms of processing, phosphorylated; which is necessary for desensitization.

The protein resides in the cell membrane. In terms of biological role, high affinity receptor for N-formyl-methionyl peptides (fMLP), which are powerful neutrophil chemotactic factors. Binding of fMLP to the receptor stimulates intracellular calcium mobilization and superoxide anion release. This response is mediated via a G-protein that activates a phosphatidylinositol-calcium second messenger system. Receptor for TAFA4, mediates its effects on chemoattracting macrophages, promoting phagocytosis and increasing ROS release. Receptor for cathepsin CTSG, leading to increased phagocyte chemotaxis. In Pongo pygmaeus (Bornean orangutan), this protein is fMet-Leu-Phe receptor (FPR1).